We begin with the raw amino-acid sequence, 273 residues long: Ribosomal RNA small subunit methyltransferase A (273 aa).

Residues Asn-18, Leu-20, Gly-45, Glu-66, Asp-91, and Asn-113 each coordinate S-adenosyl-L-methionine.

The protein belongs to the class I-like SAM-binding methyltransferase superfamily. rRNA adenine N(6)-methyltransferase family. RsmA subfamily.

It localises to the cytoplasm. The enzyme catalyses adenosine(1518)/adenosine(1519) in 16S rRNA + 4 S-adenosyl-L-methionine = N(6)-dimethyladenosine(1518)/N(6)-dimethyladenosine(1519) in 16S rRNA + 4 S-adenosyl-L-homocysteine + 4 H(+). Specifically dimethylates two adjacent adenosines (A1518 and A1519) in the loop of a conserved hairpin near the 3'-end of 16S rRNA in the 30S particle. May play a critical role in biogenesis of 30S subunits. The sequence is that of Ribosomal RNA small subunit methyltransferase A from Shigella flexneri.